Consider the following 136-residue polypeptide: Histone H3.3 (136 aa).

A disordered region spans residues 1–42 (MARTKQTARKSTGGKAPRKQLASKAARKSAPVSGGVKKPHRY). Lys-5 is modified (N6,N6,N6-trimethyllysine; alternate). Lys-5 carries the post-translational modification N6,N6-dimethyllysine; alternate. Residues Lys-5 and Lys-10 each carry the N6-methyllysine; alternate modification. Lys-10 carries the N6-acetyllysine; alternate modification. Ser-11 carries the post-translational modification Phosphoserine. The residue at position 15 (Lys-15) is an N6,N6-dimethyllysine; alternate. N6-acetyllysine; alternate occurs at positions 15, 19, 24, 28, and 37. Lys-19, Lys-24, Lys-28, and Lys-37 each carry N6-methyllysine; alternate. Lys-28 and Lys-37 each carry N6,N6,N6-trimethyllysine; alternate. Residues Lys-28 and Lys-37 each carry the N6,N6-dimethyllysine; alternate modification. N6-acetyllysine is present on residues Lys-57 and Lys-65. Lys-80 is subject to N6,N6,N6-trimethyllysine; alternate. N6,N6-dimethyllysine; alternate is present on Lys-80. Lys-80 is modified (N6-methyllysine; alternate).

This sequence belongs to the histone H3 family. As to quaternary structure, the nucleosome is a histone octamer containing two molecules each of H2A, H2B, H3 and H4 assembled in one H3-H4 heterotetramer and two H2A-H2B heterodimers. The octamer wraps approximately 147 bp of DNA. In terms of processing, phosphorylated by IPL1 to form H3S10ph. H3S10ph promotes subsequent H3K14ac formation and is required for transcriptional activation through TBP recruitment to the promoters. Mono-, di- and trimethylated by the COMPASS complex to form H3K4me1/2/3. H3K4me activates gene expression by regulating transcription elongation and plays a role in telomere length maintenance. H3K4me enrichment correlates with transcription levels, and occurs in a 5' to 3' gradient with H3K4me3 enrichment at the 5'-end of genes, shifting to H3K4me2 and then H3K4me1. Methylated by SET2 to form H3K36me. H3K36me represses gene expression. Methylated by DOT1 to form H3K79me. H3K79me is required for association of SIR proteins with telomeric regions and for telomeric silencing. The COMPASS-mediated formation of H3K4me2/3 and the DOT1-mediated formation of H3K79me require H2BK123ub1. Post-translationally, acetylation of histone H3 leads to transcriptional activation. H3K14ac formation by GCN5 is promoted by H3S10ph. H3K14ac can also be formed by ESA1. H3K56ac formation occurs predominantly in newly synthesized H3 molecules during G1, S and G2/M of the cell cycle and may be involved in DNA repair.

Its subcellular location is the nucleus. The protein localises to the chromosome. In terms of biological role, core component of nucleosome. Nucleosomes wrap and compact DNA into chromatin, limiting DNA accessibility to the cellular machineries which require DNA as a template. Histones thereby play a central role in transcription regulation, DNA repair, DNA replication and chromosomal stability. DNA accessibility is regulated via a complex set of post-translational modifications of histones, also called histone code, and nucleosome remodeling. The polypeptide is Histone H3.3 (HHT3) (Candida albicans (strain SC5314 / ATCC MYA-2876) (Yeast)).